A 238-amino-acid chain; its full sequence is Protein odd-skipped-related 2 (238 aa).

The segment at 105–126 is disordered; the sequence is EDPPVTGQSRLSPERRPARGRL. 3 C2H2-type zinc fingers span residues 134 to 156, 162 to 184, and 190 to 212; these read FICR…ERTH, YTCD…RYIH, and FKCQ…KTLH.

It belongs to the Odd C2H2-type zinc-finger protein family. As to expression, at the 8-somite stage, expressed in the pronephros, with weak generalized expression elsewhere. At 24 hpf, expressed in the kidney tubules and the anterior duct, and also in the gut. At 60 hpf, expressed in the tubules and the pectoral fin buds.

The protein resides in the nucleus. Transcriptional repressor. Required for pronephric kidney development. The polypeptide is Protein odd-skipped-related 2 (Danio rerio (Zebrafish)).